The chain runs to 218 residues: MTEPRLKIALTKGRVEQQVLPLLEEAGLDCSQVRNKQRRLIFDSETQPYEFILAKGPDVTTFLERGAADIGIVGSDILTEHESTQYELLDLGVGKCQFVLASTADFDPVAPRRKIIGTKYPLITQRYFDRLGQDVEIIKIEGSVELAPLTGLADAIVDITETGTTIRENHLQIYDYLQPVSTRLVVNRLALKQQQAAIFDLVDRLATVVDTNNPKEFV.

Belongs to the ATP phosphoribosyltransferase family. Short subfamily. As to quaternary structure, heteromultimer composed of HisG and HisZ subunits.

Its subcellular location is the cytoplasm. The enzyme catalyses 1-(5-phospho-beta-D-ribosyl)-ATP + diphosphate = 5-phospho-alpha-D-ribose 1-diphosphate + ATP. The protein operates within amino-acid biosynthesis; L-histidine biosynthesis; L-histidine from 5-phospho-alpha-D-ribose 1-diphosphate: step 1/9. In terms of biological role, catalyzes the condensation of ATP and 5-phosphoribose 1-diphosphate to form N'-(5'-phosphoribosyl)-ATP (PR-ATP). Has a crucial role in the pathway because the rate of histidine biosynthesis seems to be controlled primarily by regulation of HisG enzymatic activity. The protein is ATP phosphoribosyltransferase of Lactiplantibacillus plantarum (strain ATCC BAA-793 / NCIMB 8826 / WCFS1) (Lactobacillus plantarum).